The sequence spans 105 residues: Small ribosomal subunit protein eS24 (105 aa).

It belongs to the eukaryotic ribosomal protein eS24 family.

The sequence is that of Small ribosomal subunit protein eS24 from Haloquadratum walsbyi (strain DSM 16790 / HBSQ001).